The sequence spans 382 residues: Mating-type protein a-1 (382 aa).

Residues 116 to 184 constitute a DNA-binding region (HMG box); the sequence is IPRPPNAYIL…RLLLENPDYR (69 aa).

Binds in vitro to DNA containing a specific core sequence 5'-CTTTG-3'.

It localises to the nucleus. Mating type proteins are sequence specific DNA-binding proteins that act as master switches in yeast differentiation by controlling gene expression in a cell type-specific fashion. Transcriptional activator that induces the transcription of a-specific genes like mating factor mfa-1. Required for mating as an a-cell, blocking of heterokaryon formation (vegetative incompatibility) and for perithecium induction. The chain is Mating-type protein a-1 (mta-1) from Neurospora crassa.